Consider the following 397-residue polypeptide: Phosphoglycerate kinase (397 aa).

Substrate contacts are provided by residues 21 to 23, R37, 60 to 63, R119, and R152; these read DFN and HLGR. Residues K203, G294, E325, and 354–357 each bind ATP; that span reads GGDS.

This sequence belongs to the phosphoglycerate kinase family. Monomer.

It localises to the cytoplasm. The catalysed reaction is (2R)-3-phosphoglycerate + ATP = (2R)-3-phospho-glyceroyl phosphate + ADP. It participates in carbohydrate degradation; glycolysis; pyruvate from D-glyceraldehyde 3-phosphate: step 2/5. This is Phosphoglycerate kinase from Chlorobaculum tepidum (strain ATCC 49652 / DSM 12025 / NBRC 103806 / TLS) (Chlorobium tepidum).